Reading from the N-terminus, the 334-residue chain is G-protein coupled receptor 12 (334 aa).

Residues 1 to 48 (MNEDPKVNLSGLPRDCIDAGAPENISAAVPSQGSVAESEPELVVNPWD) lie on the Extracellular side of the membrane. Residues N8 and N24 are each glycosylated (N-linked (GlcNAc...) asparagine). A helical transmembrane segment spans residues 49 to 69 (IVLCSSGTLICCENAVVVLII). The Cytoplasmic portion of the chain corresponds to 70–78 (FHSPSLRAP). Residues 79–99 (MFLLIGSLALADLLAGLGLII) traverse the membrane as a helical segment. At 100 to 113 (NFVFAYLLQSEATK) the chain is on the extracellular side. The helical transmembrane segment at 114-134 (LVTIGLIVASFSASVCSLLAI) threads the bilayer. The Cytoplasmic portion of the chain corresponds to 135–158 (TVDRYLSLYYALTYHSERTVTFTY). Residues 159 to 179 (VMLVMLWGTSICLGLLPVMGW) form a helical membrane-spanning segment. The Extracellular segment spans residues 180–199 (NCLRDESTCSVVRPLTKNNA). The helical transmembrane segment at 200–220 (AILSISFLFMFALMLQLYIQI) threads the bilayer. Topologically, residues 221 to 252 (CKIVMRHAHQIALQHHFLATSHYVTTRKGVST) are cytoplasmic. A helical transmembrane segment spans residues 253 to 273 (LALILGTFAACWMPFTLYSLI). Topologically, residues 274 to 282 (ADYTYPSIY) are extracellular. A helical membrane pass occupies residues 283–303 (TYATLLPATYNSIINPVIYAF). Over 304-334 (RNQEIQKALCLICCGCIPSSLSQRARSPSDV) the chain is Cytoplasmic. C317 is lipidated: S-palmitoyl cysteine. S330 and S332 each carry phosphoserine.

This sequence belongs to the G-protein coupled receptor 1 family. Expressed predominantly in the forebrain and a lesser extent in the hindbrain. Lower expression in the liver.

It localises to the cell membrane. In terms of biological role, receptor with constitutive G(s) signaling activity that stimulates cyclic AMP production. Promotes neurite outgrowth and blocks myelin inhibition in neurons. The chain is G-protein coupled receptor 12 (Gpr12) from Mus musculus (Mouse).